A 296-amino-acid polypeptide reads, in one-letter code: Elongation factor Ts (296 aa).

The segment at threonine 82–valine 85 is involved in Mg(2+) ion dislocation from EF-Tu.

It belongs to the EF-Ts family.

Its subcellular location is the cytoplasm. Its function is as follows. Associates with the EF-Tu.GDP complex and induces the exchange of GDP to GTP. It remains bound to the aminoacyl-tRNA.EF-Tu.GTP complex up to the GTP hydrolysis stage on the ribosome. In Aromatoleum aromaticum (strain DSM 19018 / LMG 30748 / EbN1) (Azoarcus sp. (strain EbN1)), this protein is Elongation factor Ts.